Here is a 417-residue protein sequence, read N- to C-terminus: Solute carrier family 25 member 46-A (417 aa).

Positions 1–13 (MQPRRPDRFDGLE) are enriched in basic and acidic residues. The interval 1–90 (MQPRRPDRFD…AFGEENSNSA (90 aa)) is disordered. Residues 31–41 (SSFPARSFSSS) show a composition bias toward low complexity. The stretch at 95–186 (QLNRFAGFGI…GILSEFTHLP (92 aa)) is one Solcar 1 repeat. 6 helical membrane-spanning segments follow: residues 102–122 (FGIGLASLFTENVLAHPCIVL), 162–182 (MGSTFIVQGISLGAEGILSEF), 198–218 (IGGHLLLKGLVYVIVTPFYSA), 257–277 (LLPLLVLTFPTVLHGILHYIV), 313–333 (FPELIANFAASLCADVLLYPL), and 382–402 (LGFYKGFGAVVVQYTLHAIVL). Residues 310-415 (EDYFPELIAN…KIIYSSVVQT (106 aa)) form a Solcar 2 repeat.

The protein belongs to the mitochondrial carrier (TC 2.A.29) family.

It is found in the mitochondrion outer membrane. Functionally, may play a role in mitochondrial dynamics by controlling mitochondrial membrane fission. The polypeptide is Solute carrier family 25 member 46-A (slc25a46-a) (Xenopus laevis (African clawed frog)).